Reading from the N-terminus, the 243-residue chain is 3-deoxy-manno-octulosonate cytidylyltransferase (243 aa).

The protein belongs to the KdsB family.

The protein localises to the cytoplasm. It catalyses the reaction 3-deoxy-alpha-D-manno-oct-2-ulosonate + CTP = CMP-3-deoxy-beta-D-manno-octulosonate + diphosphate. The protein operates within nucleotide-sugar biosynthesis; CMP-3-deoxy-D-manno-octulosonate biosynthesis; CMP-3-deoxy-D-manno-octulosonate from 3-deoxy-D-manno-octulosonate and CTP: step 1/1. It participates in bacterial outer membrane biogenesis; lipopolysaccharide biosynthesis. Functionally, activates KDO (a required 8-carbon sugar) for incorporation into bacterial lipopolysaccharide in Gram-negative bacteria. The protein is 3-deoxy-manno-octulosonate cytidylyltransferase of Bartonella tribocorum (strain CIP 105476 / IBS 506).